Here is a 266-residue protein sequence, read N- to C-terminus: Apolipoprotein A-I (266 aa).

An N-terminal signal peptide occupies residues 1–18 (MKAVVLTLAVLFLTGSQA). 2 consecutive repeat copies span residues 67–88 (LKLLDNWDTLSSTVAKLREQIG) and 89–110 (PVTQEFWDNLEKETEVLRQEMN). The interval 67–266 (LKLLDNWDTL…DEATKKLNAQ (200 aa)) is 10 X approximate tandem repeats. Residue Met109 is modified to Methionine sulfoxide. A 3; half-length repeat occupies 111–121 (KDLEEVKKKVQ). Repeat copies occupy residues 122–143 (PYLDEFQSKWHEEVELYRQKVA), 144–165 (PLGAELSEGARQKLQELQEKLS), 166–187 (PLGEELRDRARTHVDALRAQLA), 188–209 (PYSDQLRERLATRLQALKEGGG), and 210–231 (AALAEYHAKASEQLSVLREKAK). Residues 232–242 (PALEDLRQGLL) form a 9; half-length repeat. Repeat unit 10 spans residues 243 to 266 (PVLESFRTSLLAAVDEATKKLNAQ).

The protein belongs to the apolipoprotein A1/A4/E family. As to quaternary structure, homodimer. Interacts with APOA1BP and CLU. Component of a sperm activating protein complex (SPAP), consisting of APOA1, an immunoglobulin heavy chain, an immunoglobulin light chain and albumin. Interacts with NDRG1. Interacts with SCGB3A2. Interacts with NAXE and YJEFN3. In terms of processing, glycosylated. Palmitoylated. Post-translationally, phosphorylation sites are present in the extracellular medium.

It is found in the secreted. In terms of biological role, participates in the reverse transport of cholesterol from tissues to the liver for excretion by promoting cholesterol efflux from tissues and by acting as a cofactor for the lecithin cholesterol acyltransferase (LCAT). As part of the SPAP complex, activates spermatozoa motility. The polypeptide is Apolipoprotein A-I (APOA1) (Odobenus rosmarus divergens (Pacific walrus)).